A 395-amino-acid polypeptide reads, in one-letter code: Nucleoside diphosphate kinase homolog 7 (395 aa).

One can recognise a DM10 domain in the interval 22–110 (QSERFAFIAE…YTARQLGSRK (89 aa)).

The protein belongs to the NDK family. Component of sperm flagellar doublet microtubules. Component of the gamma-tubulin ring complex.

The protein localises to the cytoplasm. It localises to the cytoskeleton. Its subcellular location is the microtubule organizing center. It is found in the centrosome. The protein resides in the nucleus. The protein localises to the spindle. It localises to the cilium axoneme. Its subcellular location is the flagellum axoneme. It is found in the cell projection. The protein resides in the cilium. Functionally, possesses an intrinsic kinase activity. Displays 3'-5' exonuclease activity with a preference for single-stranded DNA. Does not seem to have nucleoside diphosphate kinase activity. Functional component of the gamma-tubulin ring complex, implicated in the regulation of the microtubule-nucleating activity of the gamma-tubulin ring complex in centrosomes, in a kinase activity-dependent manner. Part of the dynein-decorated doublet microtubules (DMTs) in cilia axoneme, which is required for motile cilia beating. This is Nucleoside diphosphate kinase homolog 7 from Mus musculus (Mouse).